The primary structure comprises 211 residues: Protein-methionine-sulfoxide reductase heme-binding subunit MsrQ (211 aa).

A run of 5 helical transmembrane segments spans residues 17 to 37 (LAGL…GLGA), 54 to 74 (FLLA…PLLI), 82 to 102 (LWCF…ELGV), 116 to 136 (PYLT…FTST), and 153 to 173 (FVYL…KIIS).

The protein belongs to the MsrQ family. Heterodimer of a catalytic subunit (MsrP) and a heme-binding subunit (MsrQ). FMN serves as cofactor. It depends on heme b as a cofactor.

It is found in the cell inner membrane. In terms of biological role, part of the MsrPQ system that repairs oxidized periplasmic proteins containing methionine sulfoxide residues (Met-O), using respiratory chain electrons. Thus protects these proteins from oxidative-stress damage caused by reactive species of oxygen and chlorine generated by the host defense mechanisms. MsrPQ is essential for the maintenance of envelope integrity under bleach stress, rescuing a wide series of structurally unrelated periplasmic proteins from methionine oxidation, including the primary periplasmic chaperone SurA and the lipoprotein Pal. MsrQ provides electrons for reduction to the reductase catalytic subunit MsrP, using the quinone pool of the respiratory chain. This Escherichia coli (strain SMS-3-5 / SECEC) protein is Protein-methionine-sulfoxide reductase heme-binding subunit MsrQ.